Consider the following 209-residue polypeptide: MKRLWDISPPVSAASPVFPGDTPYQQHWKWSLTPDCPVNVSEIRLSPHIGAHADAPLHYSNGAPAIGAVPLEPFLGPCRVIHALDCGPLILPEHLRHAADGLPPRVLVRTAEHAALDWWTDDFSAYAPHTIEWLAERGVVLIGLDTPSIDPASSKTLDSHHVILRRDMRVLENLLLDDVAEGDYELIALPLALAQADASPVRAILRELG.

Position 18 (Phe-18) interacts with substrate. Zn(2+) is bound by residues His-48, His-52, and Asp-54. Catalysis depends on His-58, which acts as the Proton donor/acceptor. Zn(2+) contacts are provided by His-160 and Glu-172.

Belongs to the Cyclase 1 superfamily. KynB family. Homodimer. It depends on Zn(2+) as a cofactor.

It catalyses the reaction N-formyl-L-kynurenine + H2O = L-kynurenine + formate + H(+). Its pathway is amino-acid degradation; L-tryptophan degradation via kynurenine pathway; L-kynurenine from L-tryptophan: step 2/2. In terms of biological role, catalyzes the hydrolysis of N-formyl-L-kynurenine to L-kynurenine, the second step in the kynurenine pathway of tryptophan degradation. In Bordetella petrii (strain ATCC BAA-461 / DSM 12804 / CCUG 43448), this protein is Kynurenine formamidase.